The chain runs to 292 residues: Type II methyltransferase M.SmaI (292 aa).

The interval 110-130 is disordered; the sequence is WRDKDDKNKGRAMSYRPPTPE.

Belongs to the N(4)/N(6)-methyltransferase family. N(4) subfamily.

It carries out the reaction a 2'-deoxycytidine in DNA + S-adenosyl-L-methionine = an N(4)-methyl-2'-deoxycytidine in DNA + S-adenosyl-L-homocysteine + H(+). A beta subtype methylase thatnrecognizes the double-stranded sequence 5'-CCCGGG-3', methylates C-2 on both strands, and protects the DNA from cleavage by the SmaI endonuclease. This chain is Type II methyltransferase M.SmaI (smaIM), found in Serratia marcescens.